We begin with the raw amino-acid sequence, 215 residues long: MDAAGAPAPAPAPPAAPGSGRKELKIVIVGDGGCGKTSLLMVYSQGSFPEHYAPSVFEKYTASVTVGSKEVTLNLYDTAGQEDYDRLRPLSYQNTHLVLICYDVMNPTSYDNVLIKWFPEVTHFCRGIPMVLIGCKTDLRKDKEQLRKLRAAQLEPITYTQGQSACEQIRAALYLECSAKFRENVEDVFREAAKVALSALKKAQRQKQHRLCLLL.

N-acetylmethionine is present on M1. Residue 30–37 (GDGGCGKT) participates in GTP binding. The short motif at 52 to 60 (YAPSVFEKY) is the Effector region element. Residues 77-81 (DTAGQ) and 135-138 (CKTD) contribute to the GTP site. Residue C212 is modified to Cysteine methyl ester. C212 carries S-geranylgeranyl cysteine lipidation. The propeptide at 213-215 (LLL) is removed in mature form.

This sequence belongs to the small GTPase superfamily. Rho family.

It localises to the cell membrane. The protein localises to the cytoplasm. Its subcellular location is the cytoskeleton. Functionally, plasma membrane-associated small GTPase which cycles between an active GTP-bound and an inactive GDP-bound state. Causes the formation of thin, actin-rich surface projections called filopodia. Functions cooperatively with CDC42 and Rac to generate additional structures, increasing the diversity of actin-based morphology. The chain is Rho-related GTP-binding protein RhoF (RHOF) from Bos taurus (Bovine).